We begin with the raw amino-acid sequence, 143 residues long: Agaricus bisporus lectin (143 aa).

Residues Ala-29, Ser-48, Gly-49, and Asn-73 each contribute to the beta-D-Gal-(1-&gt;3)-alpha-D-GalNAc site. Residues Thr-82, Arg-103, and Tyr-114 each contribute to the N-acetyl-beta-D-glucosamine site.

Belongs to the fungal fruit body lectin family. In terms of assembly, homotetramer.

Its function is as follows. Lectin that recognizes O-linked galactose-beta-1,3-N-acetylgalactosamine, a disaccharide (Thomsen-Friedenreich antigen or T-disaccharide), present on cell surface glycoproteins. Can also bind galactose-beta-1,3-N-acetylglucosamine. Does not bind monosaccharides. Can be internalized by clathrin-coated vesicles after binding to surface glycoproteins. After internalization it inhibits nuclear import of nuclear localization signal dependent proteins. Inhibits proliferation of malignant cells without cytotoxicity for normal cells. The polypeptide is Agaricus bisporus lectin (Agaricus bisporus (White button mushroom)).